The chain runs to 450 residues: Tubulin alpha-6 chain (450 aa).

GTP-binding residues include glutamine 11, glutamate 71, glycine 144, threonine 145, threonine 179, asparagine 206, and asparagine 228. Residue glutamate 71 coordinates Mg(2+). Glutamate 254 is a catalytic residue. A Phosphothreonine modification is found at threonine 349. Residues 430 to 450 (KDYEEVGAEGGDDEDDEGEEY) form a disordered region. The segment covering 431 to 450 (DYEEVGAEGGDDEDDEGEEY) has biased composition (acidic residues).

The protein belongs to the tubulin family. Dimer of alpha and beta chains. A typical microtubule is a hollow water-filled tube with an outer diameter of 25 nm and an inner diameter of 15 nM. Alpha-beta heterodimers associate head-to-tail to form protofilaments running lengthwise along the microtubule wall with the beta-tubulin subunit facing the microtubule plus end conferring a structural polarity. Microtubules usually have 13 protofilaments but different protofilament numbers can be found in some organisms and specialized cells. Interacts with TFCB. The cofactor is Mg(2+). Post-translationally, undergoes a tyrosination/detyrosination cycle, the cyclic removal and re-addition of a C-terminal tyrosine residue by the enzymes tubulin tyrosine carboxypeptidase (TTCP) and tubulin tyrosine ligase (TTL), respectively. In terms of processing, acetylation of alpha chains at Lys-40 stabilizes microtubules and affects affinity and processivity of microtubule motors. This modification has a role in multiple cellular functions, ranging from cell motility, cell cycle progression or cell differentiation to intracellular trafficking and signaling.

The protein resides in the cytoplasm. Its subcellular location is the cytoskeleton. It catalyses the reaction GTP + H2O = GDP + phosphate + H(+). Tubulin is the major constituent of microtubules, a cylinder consisting of laterally associated linear protofilaments composed of alpha- and beta-tubulin heterodimers. Microtubules grow by the addition of GTP-tubulin dimers to the microtubule end, where a stabilizing cap forms. Below the cap, tubulin dimers are in GDP-bound state, owing to GTPase activity of alpha-tubulin. In Arabidopsis thaliana (Mouse-ear cress), this protein is Tubulin alpha-6 chain (TUBA6).